The chain runs to 191 residues: UPF0149 protein VS_2635 (191 aa).

This sequence belongs to the UPF0149 family.

In Vibrio atlanticus (strain LGP32) (Vibrio splendidus (strain Mel32)), this protein is UPF0149 protein VS_2635.